We begin with the raw amino-acid sequence, 225 residues long: Iron-sulfur flavoprotein CD630_04720 (225 aa).

Positions 49, 52, 55, and 61 each coordinate [4Fe-4S] cluster.

This sequence belongs to the SsuE family. Isf subfamily. In terms of assembly, homodimer. It depends on FMN as a cofactor. [4Fe-4S] cluster serves as cofactor.

Redox-active protein probably involved in electron transport. This chain is Iron-sulfur flavoprotein CD630_04720, found in Clostridioides difficile (strain 630) (Peptoclostridium difficile).